A 147-amino-acid polypeptide reads, in one-letter code: D-aminoacyl-tRNA deacylase (147 aa).

The Gly-cisPro motif, important for rejection of L-amino acids motif lies at 136–137 (GP).

Belongs to the DTD family. Homodimer.

Its subcellular location is the cytoplasm. The catalysed reaction is glycyl-tRNA(Ala) + H2O = tRNA(Ala) + glycine + H(+). It catalyses the reaction a D-aminoacyl-tRNA + H2O = a tRNA + a D-alpha-amino acid + H(+). In terms of biological role, an aminoacyl-tRNA editing enzyme that deacylates mischarged D-aminoacyl-tRNAs. Also deacylates mischarged glycyl-tRNA(Ala), protecting cells against glycine mischarging by AlaRS. Acts via tRNA-based rather than protein-based catalysis; rejects L-amino acids rather than detecting D-amino acids in the active site. By recycling D-aminoacyl-tRNA to D-amino acids and free tRNA molecules, this enzyme counteracts the toxicity associated with the formation of D-aminoacyl-tRNA entities in vivo and helps enforce protein L-homochirality. The sequence is that of D-aminoacyl-tRNA deacylase from Streptococcus equi subsp. zooepidemicus (strain MGCS10565).